The chain runs to 1235 residues: UPF0507 protein DEHA2G04334g (1235 aa).

The VPS9 domain occupies 323–487; that stretch reads QNDDSDAIKI…LSSSMNDEPQ (165 aa). The segment at 1097-1124 is disordered; sequence STTEADTTDTTDATDATHASPNLANSTN. Low complexity predominate over residues 1100 to 1115; that stretch reads EADTTDTTDATDATHA.

This sequence belongs to the UPF0507 family.

This Debaryomyces hansenii (strain ATCC 36239 / CBS 767 / BCRC 21394 / JCM 1990 / NBRC 0083 / IGC 2968) (Yeast) protein is UPF0507 protein DEHA2G04334g.